The sequence spans 780 residues: Kojibiose phosphorylase (780 aa).

354–355 (WD) is a binding site for substrate. The Proton donor role is filled by E496. Substrate is bound at residue 608 to 609 (KQ).

This sequence belongs to the glycosyl hydrolase 65 family.

It catalyses the reaction kojibiose + phosphate = beta-D-glucose 1-phosphate + D-glucose. Functionally, catalyzes the reversible phosphorolysis of kojibiose into beta-D-glucose 1-phosphate (Glc1P) and D-glucose. In the reverse direction, uses Glc1P as acceptor to produce alpha-1,2-glucans up to a degree of polymerization of 6. This chain is Kojibiose phosphorylase, found in Halothermothrix orenii (strain H 168 / OCM 544 / DSM 9562).